Here is a 1139-residue protein sequence, read N- to C-terminus: Retinoblastoma-like protein 2 (1139 aa).

The tract at residues 1–45 is disordered; it reads MPSGGDQSPPPPPPPPAAAASDEEEEDDGEAEDAAPPAESPTPQI. The span at 8–17 shows a compositional bias: pro residues; the sequence is SPPPPPPPPA. Residues 21–33 are compositionally biased toward acidic residues; it reads SDEEEEDDGEAED. Ser413 is subject to Phosphoserine. A Phosphothreonine modification is found at Thr417. The interval 417-616 is domain A; sequence TPVSTATHSL…EKIRDNENRV (200 aa). The interval 417–1024 is pocket; binds E1A; the sequence is TPVSTATHSL…KQIKTFAMKY (608 aa). O-linked (GlcNAc) serine glycosylation is present at Ser420. Positions 617–827 are spacer; that stretch reads PTCEEVMPPQ…KQGQSVTSSS (211 aa). Ser639 is subject to Phosphoserine. Thr642 bears the Phosphothreonine mark. A disordered region spans residues 654-678; it reads GGLGRSITSPTTLYDRYSSPPASTT. Phosphoserine occurs at positions 662, 672, and 688. A compositionally biased stretch (low complexity) spans 810 to 827; that stretch reads ISPGGQQQKQGQSVTSSS. Disordered regions lie at residues 810–831 and 933–999; these read ISPG…NRPR and KGKR…DMEE. The segment at 828-1024 is domain B; it reads NRPRKTSSLS…KQIKTFAMKY (197 aa). The segment covering 941 to 955 has biased composition (polar residues); it reads SGSSDSRSHQNSPTE. Ser948, Ser952, Ser966, Ser971, Ser972, and Ser973 each carry phosphoserine. Low complexity predominate over residues 964–973; sequence DSSPVMRSSS. Thr974 is modified (phosphothreonine). Residues 977 to 987 are compositionally biased toward pro residues; that stretch reads VPQPSSAPPTP. Phosphoserine occurs at positions 981 and 982. Thr986 is subject to Phosphothreonine. 4 positions are modified to phosphoserine: Ser1035, Ser1068, Ser1080, and Ser1112.

This sequence belongs to the retinoblastoma protein (RB) family. As to quaternary structure, interacts with AATF. Interacts with KMT5B, KMT5C and USP4. Component of the DREAM complex (also named LINC complex) at least composed of E2F4, E2F5, LIN9, LIN37, LIN52, LIN54, MYBL1, MYBL2, RBL1, RBL2, RBBP4, TFDP1 and TFDP2. The complex exists in quiescent cells where it represses cell cycle-dependent genes. It dissociates in S phase when LIN9, LIN37, LIN52 and LIN54 form a subcomplex that binds to MYBL2. Interacts with RINT1. Interacts with PML (isoform PML-1, isoform PML-2, isoform PML-3, isoform PML-4 and isoform PML-5). Interacts with RBBP9. Interacts with CD53. In terms of assembly, (Microbial infection) Interacts with JC virus small t antigen. In terms of processing, during G0 and early G1 phase of the cell cycle, phosphorylated on Ser-639 and on 5 sites within the domain B. Phosphorylation on Ser-672 in G1 leads to its ubiquitin-dependent proteolysis.

It localises to the nucleus. In terms of biological role, key regulator of entry into cell division. Directly involved in heterochromatin formation by maintaining overall chromatin structure and, in particular, that of constitutive heterochromatin by stabilizing histone methylation. Recruits and targets histone methyltransferases KMT5B and KMT5C, leading to epigenetic transcriptional repression. Controls histone H4 'Lys-20' trimethylation. Probably acts as a transcription repressor by recruiting chromatin-modifying enzymes to promoters. Potent inhibitor of E2F-mediated trans-activation, associates preferentially with E2F5. Binds to cyclins A and E. Binds to and may be involved in the transforming capacity of the adenovirus E1A protein. May act as a tumor suppressor. In Homo sapiens (Human), this protein is Retinoblastoma-like protein 2 (RBL2).